Consider the following 274-residue polypeptide: Transcription factor MYB32 (274 aa).

HTH myb-type domains are found at residues 9 to 61 (KDHT…INYL) and 62 to 116 (RPDL…KRKL). DNA-binding regions (H-T-H motif) lie at residues 37–61 (WRSL…INYL) and 89–112 (WSLI…NTHV). A disordered region spans residues 123 to 144 (PATHRPINETKTSQDSSDSSKT).

Mostly expressed in roots, and, to a lower extent, in stems, flower buds, and siliques.

It localises to the nucleus. The protein is Transcription factor MYB32 (MYB32) of Arabidopsis thaliana (Mouse-ear cress).